Here is a 623-residue protein sequence, read N- to C-terminus: Frizzled and smoothened-like protein M (623 aa).

A signal peptide spans 1 to 18 (MKSIFIIIFILYVFQVNS). Residues 19 to 243 (QTIYPIDPSG…WDQLYNLSNT (225 aa)) are Extracellular-facing. Residues 25 to 163 (DPSGKCEQYI…NYSEFNLTNY (139 aa)) enclose the FZ domain. Disulfide bonds link cysteine 30–cysteine 100 and cysteine 42–cysteine 93. N-linked (GlcNAc...) asparagine glycosylation is found at asparagine 57, asparagine 106, asparagine 109, asparagine 154, asparagine 159, asparagine 169, asparagine 199, and asparagine 239. A helical membrane pass occupies residues 244–264 (LAVLSTFGSLYLLVTFIILNP). At 265–273 (KVTSFDRMY) the chain is on the cytoplasmic side. A helical transmembrane segment spans residues 274-294 (GFFNGSVFMMSLSGVILFIAG). Residues 295–317 (GPRALIKDGGARISVFEDPLCSS) are Extracellular-facing. The chain crosses the membrane as a helical span at residues 318 to 338 (TGFIFQLFAINAILFWAYMGF). At 339–354 (DLWWRVKYITKPLNIQ) the chain is on the cytoplasmic side. Residues 355–375 (KYYVPIAFTISFIFSVIPLAT) traverse the membrane as a helical segment. Residues 376 to 397 (KNYRMVRGNIHCWVHKAVLQNT) are Extracellular-facing. A helical membrane pass occupies residues 398–418 (LFFGPLGLTLTISTGFIGLVI). Topologically, residues 419–439 (YEIYKIVKATGRGGIMKLEIK) are cytoplasmic. Residues 440–460 (PILNIVLIYFSFVYIFAFNFH) form a helical membrane-spanning segment. The Extracellular segment spans residues 461-494 (NDNNSKNTYGSIDEFFQCTLESDDPSKCTVGGPS). Asparagine 463 carries N-linked (GlcNAc...) asparagine glycosylation. The chain crosses the membrane as a helical span at residues 495–515 (IGSLGYFIYCIRIYGIYCFFL). The Cytoplasmic segment spans residues 516–623 (QGLNERAFKI…DIEIGSVNIK (108 aa)). Residues 552–590 (PSESGNSSTTAGTSTTINNSNINKKNNNSKPTLSTMDSN) form a disordered region. The span at 555–580 (SGNSSTTAGTSTTINNSNINKKNNNS) shows a compositional bias: low complexity.

Belongs to the G-protein coupled receptor Fz/Smo family.

The protein resides in the membrane. The protein is Frizzled and smoothened-like protein M (fslM-1) of Dictyostelium discoideum (Social amoeba).